Here is a 622-residue protein sequence, read N- to C-terminus: Putative E3 ubiquitin-protein ligase ORTHRUS 4 (622 aa).

The segment at 12 to 62 (DGVCMRCQVTPPSEETLTCGTCVTPWHVSCLLPESLASSTGDWECPDCSGV) adopts a PHD-type zinc-finger fold. The segment at 129–169 (CSICIQLPERPVTTPCGHNFCLKCFEKWAVGQGKLTCMICR) adopts an RING-type 1 zinc-finger fold. The YDG domain occupies 258–407 (TRNQGVLVGE…HKMCRYLFVR (150 aa)). The RING-type 2 zinc finger occupies 498–555 (CQICRKVLSLPVTTPCAHNFCKACLEAKFAGITQLRDRSNGVRKLRAKKNIMTCPCCT). The stretch at 566-602 (QVNREMMEIIENFKKSEEEAEVAESSNISEEEEEESE) forms a coiled coil. Residues 579 to 622 (KKSEEEAEVAESSNISEEEEEESEPPTKKIKMDNNSVGDTSLSA) form a disordered region. The span at 611–622 (DNNSVGDTSLSA) shows a compositional bias: polar residues.

Its subcellular location is the nucleus. The enzyme catalyses S-ubiquitinyl-[E2 ubiquitin-conjugating enzyme]-L-cysteine + [acceptor protein]-L-lysine = [E2 ubiquitin-conjugating enzyme]-L-cysteine + N(6)-ubiquitinyl-[acceptor protein]-L-lysine.. Its pathway is protein modification; protein ubiquitination. Functionally, E3 ubiquitin-protein ligase. May participate in CpG methylation-dependent transcriptional regulation. The polypeptide is Putative E3 ubiquitin-protein ligase ORTHRUS 4 (ORTH4) (Arabidopsis thaliana (Mouse-ear cress)).